The primary structure comprises 132 residues: Glycine cleavage system H protein (132 aa).

The region spanning 24 to 106 (TVRVGITDFA…YGAGWLLDVQ (83 aa)) is the Lipoyl-binding domain. K65 is modified (N6-lipoyllysine).

It belongs to the GcvH family. In terms of assembly, the glycine cleavage system is composed of four proteins: P, T, L and H. The cofactor is (R)-lipoate.

In terms of biological role, the glycine cleavage system catalyzes the degradation of glycine. The H protein shuttles the methylamine group of glycine from the P protein to the T protein. The chain is Glycine cleavage system H protein from Mycobacterium avium (strain 104).